The sequence spans 504 residues: ATP synthase subunit alpha (504 aa).

169-176 (GDRQTGKT) provides a ligand contact to ATP.

Belongs to the ATPase alpha/beta chains family. F-type ATPases have 2 components, CF(1) - the catalytic core - and CF(0) - the membrane proton channel. CF(1) has five subunits: alpha(3), beta(3), gamma(1), delta(1), epsilon(1). CF(0) has three main subunits: a(1), b(2) and c(9-12). The alpha and beta chains form an alternating ring which encloses part of the gamma chain. CF(1) is attached to CF(0) by a central stalk formed by the gamma and epsilon chains, while a peripheral stalk is formed by the delta and b chains.

It localises to the cell membrane. The catalysed reaction is ATP + H2O + 4 H(+)(in) = ADP + phosphate + 5 H(+)(out). Produces ATP from ADP in the presence of a proton gradient across the membrane. The alpha chain is a regulatory subunit. The protein is ATP synthase subunit alpha of Clostridium botulinum (strain Alaska E43 / Type E3).